The sequence spans 575 residues: Melatonin-related receptor (575 aa).

Topologically, residues 1-30 are extracellular; sequence MGRTLAVPTPYGCIGCKLPQPDYPPALIVF. Residues 31–51 form a helical membrane-spanning segment; it reads MFCAMVITIVVDLIGNSMVIL. Residues 52 to 64 are Cytoplasmic-facing; the sequence is AVSKNKKLRNSGN. A helical transmembrane segment spans residues 65–85; that stretch reads VFVVSLSVADMLVAIYPYPLM. Residues 86 to 103 are Extracellular-facing; the sequence is LHAMAIGGWDLSKLQCQM. C101 and C178 are oxidised to a cystine. The chain crosses the membrane as a helical span at residues 104–124; that stretch reads VGFITGLSVVGSIFNIMAIAI. Residues 125-143 are Cytoplasmic-facing; sequence NRYCYICHSLQYERIFSVR. Residues 144 to 164 traverse the membrane as a helical segment; that stretch reads NTCIYLAVTWIMTVLAVLPNM. Residues 165–188 lie on the Extracellular side of the membrane; the sequence is YIGTIEYDPRTYTCIFNYVNNPAF. The chain crosses the membrane as a helical span at residues 189–209; that stretch reads AVTIVCIHFVLPLLIVGFCYV. The Cytoplasmic portion of the chain corresponds to 210–239; sequence KIWTKVLAARDPAGQNPDNQLAEVRNFLTM. A helical transmembrane segment spans residues 240-260; that stretch reads FVIFLLFAVCWCPINALTVLV. Topologically, residues 261-273 are extracellular; that stretch reads AVNPKEMAGKIPN. A helical membrane pass occupies residues 274 to 294; that stretch reads WVYLAAYFIAYFNSCLNAVIY. Residues 295–575 are Cytoplasmic-facing; that stretch reads GVLNENFRRE…VDADSDEMAV (281 aa). Disordered stretches follow at residues 368–421 and 446–474; these read VPLP…TVYP and SSHP…TGYT. Positions 455-474 are enriched in polar residues; the sequence is PSKTAISPATSFPKPTTGYT.

Belongs to the G-protein coupled receptor 1 family. In terms of assembly, homodimer, and heterodimer with MTNR1A and MTNR1B. Interacts with KAT5. Interacts with RTN4 isoform A/NOGO-A. Interacts with TGFBR1.

Its subcellular location is the cell membrane. Its function is as follows. G protein-coupled receptor that plays a role in numerous physiological processes including regulation of energy metabolism, neurite outgrowth or cell migration. Promotes self-renewal and neuronal differentiation of neural progenitor cells through activation of the NOTCH and WNT/beta-catenin signaling pathways. Modulates the KAT5-dependent glucocorticoid receptor signaling by modulating KAT5 subcellular compartmentalisation. Also plays a role in the activation TGFBR1 in the absence of TGFBR2 by interfering with FKBP1A binding to TGFBR1, leading to induction of both canonical and non-canonical SMAD signaling pathways resulting in inhibition of proliferation or promotion of migration. In Ovis aries (Sheep), this protein is Melatonin-related receptor (GPR50).